We begin with the raw amino-acid sequence, 181 residues long: Photosystem I assembly protein Ycf4 (181 aa).

2 consecutive transmembrane segments (helical) span residues 19-39 (YFWA…GISS) and 62-82 (VMMF…LTII).

This sequence belongs to the Ycf4 family.

The protein localises to the plastid. It is found in the chloroplast thylakoid membrane. In terms of biological role, seems to be required for the assembly of the photosystem I complex. This is Photosystem I assembly protein Ycf4 from Phaeodactylum tricornutum (strain CCAP 1055/1).